Reading from the N-terminus, the 237-residue chain is Sugar fermentation stimulation protein homolog (237 aa).

This sequence belongs to the SfsA family.

This Pseudomonas syringae pv. syringae (strain B728a) protein is Sugar fermentation stimulation protein homolog.